The following is a 321-amino-acid chain: Methionyl-tRNA formyltransferase (321 aa).

111–114 (GLLP) serves as a coordination point for (6S)-5,6,7,8-tetrahydrofolate.

This sequence belongs to the Fmt family.

It catalyses the reaction L-methionyl-tRNA(fMet) + (6R)-10-formyltetrahydrofolate = N-formyl-L-methionyl-tRNA(fMet) + (6S)-5,6,7,8-tetrahydrofolate + H(+). Attaches a formyl group to the free amino group of methionyl-tRNA(fMet). The formyl group appears to play a dual role in the initiator identity of N-formylmethionyl-tRNA by promoting its recognition by IF2 and preventing the misappropriation of this tRNA by the elongation apparatus. The polypeptide is Methionyl-tRNA formyltransferase (Chlamydia abortus (strain DSM 27085 / S26/3) (Chlamydophila abortus)).